The following is a 236-amino-acid chain: CD81 antigen (236 aa).

The Cytoplasmic portion of the chain corresponds to 1–12; that stretch reads MGVEGCTKCIKY. The chain crosses the membrane as a helical span at residues 13 to 33; that stretch reads LLFVFNFVFWLAGGVILGVAL. Over 34–63 the chain is Extracellular; that stretch reads WLRHDPQTTTLLYLELGDKPAPSTFYVGIY. Residues 64 to 84 form a helical membrane-spanning segment; it reads ILIAVGAVMMFVGFLGCYGAI. The Cytoplasmic segment spans residues 85-89; it reads QESQC. Residues 90 to 112 form a helical membrane-spanning segment; sequence LLGTFFTCLVILFACEVAAGIWG. The Extracellular portion of the chain corresponds to 113-201; it reads FVNKDQIAKD…QKIDELFSGK (89 aa). 2 disulfide bridges follow: Cys156-Cys190 and Cys157-Cys175. The helical transmembrane segment at 202–224 threads the bilayer; it reads LYLIGIAAIVVAVIMIFEMILSM. Glu219 is a binding site for cholesterol. At 225–236 the chain is on the cytoplasmic side; it reads VLCCGIRNSSVY.

Belongs to the tetraspanin (TM4SF) family. As to quaternary structure, homodimer. Part of a complex composed of CD19, CR2/CD21, CD81 and IFITM1/CD225 in the membrane of mature B cells. Interacts (via the second extracellular domain) with CD19; this interaction is initiated early during biosynthesis in the ER and enables trafficking of only properly folded CD19. Part of a complex that includes MHC class II/HLA-DR molecules and IFITM1. Interacts with IFITM1. Interacts with IFITM2 and IFITM3. Part of integrin-tetraspanin complex composed of CD9, CD81, beta-1 and beta-2 integrins in the membrane of monocyte/macrophages. Interacts (via the second extracellular domain) with integrin ITGAV:ITGB3. Interacts with CD247/CD3 zeta, ICAM1 and CD9 at the immune synapse on T cell membrane. Part of a GPCR-tetraspanin complex consisting at least of ADGRG1, CD81, possibly CD9, and GNA11 in which CD81 enhances the association of ADGRG1 with GNA11. Part of a complex composed of CD9, CD81, PTGFRN and IGSF8. Interacts directly with IGSF8. Interacts with CD53 and SCIMP. Interacts with SAMHD1 (via its C-terminus). Interacts with glypican GPC3 and with the transcriptional repressor HHEX; binding to GPC3 decreases the availability of free CD81 for binding to HHEX, resulting in nuclear translocation of HHEX and transcriptional repression. Interacts with CLDN1. Interacts with CLDN6 and CLDN9. In terms of processing, not glycosylated. Likely constitutively palmitoylated at low levels. Protein palmitoylation is up-regulated upon coligation of BCR and CD9-C2R-CD81 complexes in lipid rafts.

Its subcellular location is the cell membrane. It localises to the basolateral cell membrane. Its function is as follows. Structural component of specialized membrane microdomains known as tetraspanin-enriched microdomains (TERMs), which act as platforms for receptor clustering and signaling. Essential for trafficking and compartmentalization of CD19 receptor on the surface of activated B cells. Upon initial encounter with microbial pathogens, enables the assembly of CD19-CR2/CD21 and B cell receptor (BCR) complexes at signaling TERMs, lowering the threshold dose of antigen required to trigger B cell clonal expansion and antibody production. In T cells, facilitates the localization of CD247/CD3 zeta at antigen-induced synapses with B cells, providing for costimulation and polarization toward T helper type 2 phenotype. Present in MHC class II compartments, may also play a role in antigen presentation. Can act both as positive and negative regulator of homotypic or heterotypic cell-cell fusion processes. Positively regulates sperm-egg fusion and may be involved in acrosome reaction. In myoblasts, associates with CD9 and PTGFRN and inhibits myotube fusion during muscle regeneration. In macrophages, associates with CD9 and beta-1 and beta-2 integrins, and prevents macrophage fusion into multinucleated giant cells specialized in ingesting complement-opsonized large particles. Also prevents the fusion of mononuclear cell progenitors into osteoclasts in charge of bone resorption. May regulate the compartmentalization of enzymatic activities. In T cells, defines the subcellular localization of dNTPase SAMHD1 and permits its degradation by the proteasome, thereby controlling intracellular dNTP levels. Also involved in cell adhesion and motility. Positively regulates integrin-mediated adhesion of macrophages, particularly relevant for the inflammatory response in the lung. The chain is CD81 antigen (Cd81) from Rattus norvegicus (Rat).